The chain runs to 162 residues: Shikimate kinase (162 aa).

Residue 11–16 participates in ATP binding; it reads GSGKSS. Ser15 is a binding site for Mg(2+). Asp33, Arg57, and Gly80 together coordinate substrate. Arg116 is an ATP binding site. A substrate-binding site is contributed by Arg132.

It belongs to the shikimate kinase family. Monomer. It depends on Mg(2+) as a cofactor.

The protein localises to the cytoplasm. The catalysed reaction is shikimate + ATP = 3-phosphoshikimate + ADP + H(+). Its pathway is metabolic intermediate biosynthesis; chorismate biosynthesis; chorismate from D-erythrose 4-phosphate and phosphoenolpyruvate: step 5/7. Functionally, catalyzes the specific phosphorylation of the 3-hydroxyl group of shikimic acid using ATP as a cosubstrate. The sequence is that of Shikimate kinase from Helicobacter pylori (strain J99 / ATCC 700824) (Campylobacter pylori J99).